The sequence spans 352 residues: Phosphoribosylformylglycinamidine cyclo-ligase (352 aa).

Belongs to the AIR synthase family.

The protein localises to the cytoplasm. The catalysed reaction is 2-formamido-N(1)-(5-O-phospho-beta-D-ribosyl)acetamidine + ATP = 5-amino-1-(5-phospho-beta-D-ribosyl)imidazole + ADP + phosphate + H(+). It functions in the pathway purine metabolism; IMP biosynthesis via de novo pathway; 5-amino-1-(5-phospho-D-ribosyl)imidazole from N(2)-formyl-N(1)-(5-phospho-D-ribosyl)glycinamide: step 2/2. This Pseudomonas syringae pv. tomato (strain ATCC BAA-871 / DC3000) protein is Phosphoribosylformylglycinamidine cyclo-ligase.